Here is a 38-residue protein sequence, read N- to C-terminus: Large ribosomal subunit protein bL36 (38 aa).

Belongs to the bacterial ribosomal protein bL36 family.

The chain is Large ribosomal subunit protein bL36 from Flavobacterium johnsoniae (strain ATCC 17061 / DSM 2064 / JCM 8514 / BCRC 14874 / CCUG 350202 / NBRC 14942 / NCIMB 11054 / UW101) (Cytophaga johnsonae).